Reading from the N-terminus, the 784-residue chain is Toll-like receptor 2 (784 aa).

The signal sequence occupies residues methionine 1–glycine 20. Residues alanine 21–arginine 587 are Extracellular-facing. Cysteines 30 and 36 form a disulfide. LRR repeat units follow at residues valine 54–asparagine 77, leucine 78–asparagine 101, leucine 102–valine 125, leucine 126–asparagine 150, leucine 151–phenylalanine 175, leucine 176–asparagine 199, isoleucine 200–serine 223, leucine 224–serine 250, valine 251–glycine 278, isoleucine 279–asparagine 308, valine 309–arginine 337, valine 338–serine 361, leucine 362–phenylalanine 388, leucine 389–asparagine 414, leucine 415–lysine 437, methionine 438–glutamine 457, threonine 458–glutamine 478, leucine 479–valine 500, and leucine 501–glutamine 524. N-linked (GlcNAc...) asparagine glycosylation occurs at asparagine 114. Asparagine 199 is a glycosylation site (N-linked (GlcNAc...) asparagine). Residues cysteine 353 and cysteine 382 are joined by a disulfide bond. An intrachain disulfide couples cysteine 432 to cysteine 454. The N-linked (GlcNAc...) asparagine glycan is linked to asparagine 442. The LRRCT domain occupies leucine 525–arginine 579. A helical transmembrane segment spans residues alanine 588–leucine 608. Residues cysteine 609–serine 784 are Cytoplasmic-facing. A TIR domain is found at isoleucine 639–isoleucine 782. Lysine 754 participates in a covalent cross-link: Glycyl lysine isopeptide (Lys-Gly) (interchain with G-Cter in ubiquitin). The ATG16L1-binding motif signature appears at tyrosine 761 to leucine 778.

The protein belongs to the Toll-like receptor family. In terms of assembly, interacts with LY96, TLR1 and TLR6 (via extracellular domain). TLR2 seems to exist in heterodimers with either TLR1 or TLR6 before stimulation by the ligand. The heterodimers form bigger oligomers in response to their corresponding ligands as well as further heterotypic associations with other receptors such as CD14 and/or CD36. Binds MYD88 (via TIR domain). Interacts with TICAM1. Interacts with CNPY3. Interacts with ATG16L1. Interacts with PPP1R11. Interacts with TICAM2. Interacts with TIRAP. In terms of processing, ubiquitinated at Lys-754 by PPP1R11, leading to its degradation. Deubiquitinated by USP2. Glycosylation of Asn-442 is critical for secretion of the N-terminal ectodomain of TLR2.

It is found in the membrane. It localises to the cytoplasmic vesicle. The protein resides in the phagosome membrane. Its subcellular location is the membrane raft. Cooperates with LY96 to mediate the innate immune response to bacterial lipoproteins and other microbial cell wall components. Cooperates with TLR1 or TLR6 to mediate the innate immune response to bacterial lipoproteins or lipopeptides. Acts via MYD88 and TRAF6, leading to NF-kappa-B activation, cytokine secretion and the inflammatory response. May also promote apoptosis in response to lipoproteins. Forms activation clusters composed of several receptors depending on the ligand, these clusters trigger signaling from the cell surface and subsequently are targeted to the Golgi in a lipid-raft dependent pathway. Forms the cluster TLR2:TLR6:CD14:CD36 in response to diacylated lipopeptides and TLR2:TLR1:CD14 in response to triacylated lipopeptides. The chain is Toll-like receptor 2 (TLR2) from Bos taurus (Bovine).